The primary structure comprises 205 residues: Inosine triphosphate pyrophosphatase (205 aa).

20-25 lines the ITP pocket; sequence TGNAKK. Position 48 (E48) interacts with Mg(2+). ITP-binding positions include K60, 76 to 77, K93, 152 to 155, K175, and 180 to 181; these read DT, FGWD, and HR.

It belongs to the HAM1 NTPase family. Homodimer. Mg(2+) serves as cofactor. Mn(2+) is required as a cofactor.

It is found in the cytoplasm. It carries out the reaction ITP + H2O = IMP + diphosphate + H(+). The catalysed reaction is dITP + H2O = dIMP + diphosphate + H(+). It catalyses the reaction XTP + H2O = XMP + diphosphate + H(+). Pyrophosphatase that hydrolyzes non-canonical purine nucleotides such as inosine triphosphate (ITP), deoxyinosine triphosphate (dITP) or xanthosine 5'-triphosphate (XTP) to their respective monophosphate derivatives. The enzyme does not distinguish between the deoxy- and ribose forms. Probably excludes non-canonical purines from RNA and DNA precursor pools, thus preventing their incorporation into RNA and DNA and avoiding chromosomal lesions. The protein is Inosine triphosphate pyrophosphatase of Oryza sativa subsp. japonica (Rice).